A 664-amino-acid polypeptide reads, in one-letter code: Chaperone protein dnaK1 (664 aa).

Thr-198 is modified (phosphothreonine; by autocatalysis).

Belongs to the heat shock protein 70 family.

Acts as a chaperone. In Prochlorococcus marinus (strain MIT 9313), this protein is Chaperone protein dnaK1 (dnaK1).